A 155-amino-acid polypeptide reads, in one-letter code: 17.3 kDa class II heat shock protein (155 aa).

The sHSP domain maps to aspartate 39 to alanine 155.

This sequence belongs to the small heat shock protein (HSP20) family.

The protein resides in the cytoplasm. The sequence is that of 17.3 kDa class II heat shock protein from Solanum peruvianum (Peruvian tomato).